Reading from the N-terminus, the 317-residue chain is GTPase Era (317 aa).

The 174-residue stretch at 17-190 (RAGFACFVGR…ADLLTPLLPE (174 aa)) folds into the Era-type G domain. The segment at 25-32 (GRPNAGKS) is G1. Position 25–32 (25–32 (GRPNAGKS)) interacts with GTP. The G2 stretch occupies residues 51–55 (QTTRH). A G3 region spans residues 72 to 75 (DTPG). Residues 72-76 (DTPGL) and 135-138 (TKTD) each bind GTP. The interval 135 to 138 (TKTD) is G4. Residues 169 to 171 (VSA) are G5. One can recognise a KH type-2 domain in the interval 221-303 (VRDELPHSIA…FLDLHVKVAK (83 aa)).

Belongs to the TRAFAC class TrmE-Era-EngA-EngB-Septin-like GTPase superfamily. Era GTPase family. In terms of assembly, monomer.

Its subcellular location is the cytoplasm. The protein resides in the cell membrane. In terms of biological role, an essential GTPase that binds both GDP and GTP, with rapid nucleotide exchange. Plays a role in 16S rRNA processing and 30S ribosomal subunit biogenesis and possibly also in cell cycle regulation and energy metabolism. The chain is GTPase Era from Streptomyces coelicolor (strain ATCC BAA-471 / A3(2) / M145).